We begin with the raw amino-acid sequence, 309 residues long: Sulfate adenylyltransferase subunit 2 (309 aa).

It belongs to the PAPS reductase family. CysD subfamily. As to quaternary structure, heterodimer composed of CysD, the smaller subunit, and CysN.

The enzyme catalyses sulfate + ATP + H(+) = adenosine 5'-phosphosulfate + diphosphate. It functions in the pathway sulfur metabolism; hydrogen sulfide biosynthesis; sulfite from sulfate: step 1/3. Its function is as follows. With CysN forms the ATP sulfurylase (ATPS) that catalyzes the adenylation of sulfate producing adenosine 5'-phosphosulfate (APS) and diphosphate, the first enzymatic step in sulfur assimilation pathway. APS synthesis involves the formation of a high-energy phosphoric-sulfuric acid anhydride bond driven by GTP hydrolysis by CysN coupled to ATP hydrolysis by CysD. The protein is Sulfate adenylyltransferase subunit 2 of Mycobacterium bovis (strain ATCC BAA-935 / AF2122/97).